A 231-amino-acid polypeptide reads, in one-letter code: MKIGIIGAMEQEVAILKEQINGLATTIKAGCTFHTGTLNGAEVVLLQSGIGKVAAAVGTTLLISDHNVDVVLNTGSAGGFDSSLNLGDVVISTEVRHHDADVTAFGYEMGQMAQQPAAFKADEKLMAVAEKALTQMEDKHAVRGLICTGDAFVCTPERQAFIRSHFPSVIAVEMEASAIAQTCHQFSVPFVVVRAISDVADKESPMSFEEFLPLAAESSSEMVMKMVTLLK.

The active-site Proton acceptor is glutamate 12. Substrate-binding positions include glycine 78, valine 153, and 174–175 (ME). The active-site Proton donor is aspartate 198.

This sequence belongs to the PNP/UDP phosphorylase family. MtnN subfamily.

The enzyme catalyses S-adenosyl-L-homocysteine + H2O = S-(5-deoxy-D-ribos-5-yl)-L-homocysteine + adenine. It carries out the reaction S-methyl-5'-thioadenosine + H2O = 5-(methylsulfanyl)-D-ribose + adenine. It catalyses the reaction 5'-deoxyadenosine + H2O = 5-deoxy-D-ribose + adenine. It participates in amino-acid biosynthesis; L-methionine biosynthesis via salvage pathway; S-methyl-5-thio-alpha-D-ribose 1-phosphate from S-methyl-5'-thioadenosine (hydrolase route): step 1/2. Its function is as follows. Catalyzes the irreversible cleavage of the glycosidic bond in both 5'-methylthioadenosine (MTA) and S-adenosylhomocysteine (SAH/AdoHcy) to adenine and the corresponding thioribose, 5'-methylthioribose and S-ribosylhomocysteine, respectively. Also cleaves 5'-deoxyadenosine, a toxic by-product of radical S-adenosylmethionine (SAM) enzymes, into 5-deoxyribose and adenine. This is 5'-methylthioadenosine/S-adenosylhomocysteine nucleosidase from Aliivibrio salmonicida (strain LFI1238) (Vibrio salmonicida (strain LFI1238)).